The following is a 155-amino-acid chain: Small ribosomal subunit protein uS7cz/uS7cy (155 aa).

This sequence belongs to the universal ribosomal protein uS7 family. As to quaternary structure, part of the 30S ribosomal subunit.

Its subcellular location is the plastid. The protein localises to the chloroplast. One of the primary rRNA binding proteins, it binds directly to 16S rRNA where it nucleates assembly of the head domain of the 30S subunit. The chain is Small ribosomal subunit protein uS7cz/uS7cy (rps7-A) from Phaseolus vulgaris (Kidney bean).